The sequence spans 352 residues: Anthranilate phosphoribosyltransferase (352 aa).

Residues Gly-83, 86-87 (GD), Thr-91, 93-96 (NIST), 111-119 (KHGGRSVSS), and Ala-123 each bind 5-phospho-alpha-D-ribose 1-diphosphate. Gly-83 serves as a coordination point for anthranilate. Ser-95 is a Mg(2+) binding site. Arg-169 provides a ligand contact to anthranilate. Asp-228 and Glu-229 together coordinate Mg(2+).

Belongs to the anthranilate phosphoribosyltransferase family. In terms of assembly, homodimer. Mg(2+) is required as a cofactor.

It catalyses the reaction N-(5-phospho-beta-D-ribosyl)anthranilate + diphosphate = 5-phospho-alpha-D-ribose 1-diphosphate + anthranilate. The protein operates within amino-acid biosynthesis; L-tryptophan biosynthesis; L-tryptophan from chorismate: step 2/5. Catalyzes the transfer of the phosphoribosyl group of 5-phosphorylribose-1-pyrophosphate (PRPP) to anthranilate to yield N-(5'-phosphoribosyl)-anthranilate (PRA). This chain is Anthranilate phosphoribosyltransferase, found in Neisseria meningitidis serogroup A / serotype 4A (strain DSM 15465 / Z2491).